A 756-amino-acid polypeptide reads, in one-letter code: MDSGRDFLTLHGLQDDEDLQALLKGSQLLKVKSSSWRRERFYKLQEDCKTIWQESRKVMRTPESQLFSIEDIQEVRMGHRTEGLEKFARDVPEDRCFSIVFKDQRNTLDLIAPSPADAQHWVLGLHKIIHHSGSMDQRQKLQHWIHSCLRKADKNKDNKMSFKELQNFLKELNIQVDDSYARKIFRECDHSQTDSLEDEEIEAFYKMLTQRVEIDRTFAEAAGSGETLSVDQLVTFLQHQQREEAAGPALALSLIERYEPSETAKAQRQMTKDGFLMYLLSADGSAFSLAHRRVYQDMGQPLSHYLVSSSHNTYLLEDQLAGPSSTEAYIRALCKGCRCLELDCWDGPNQEPIIYHGYTFTSKILFCDVLRAIRDYAFKASPYPVILSLENHCTLEQQRVMARHLHAILGPMLLNRPLDGVTNSLPSPEQLKGKILLKGKKLGGLLPPGGEGGPEATVVSDEDEAAEMEDEAVRSRVQHKPKEDKLRLAQELSDMVIYCKSVHFGGFSSPGTPGQAFYEMASFSENRALRLLQESGNGFVRHNVGHLSRIYPAGWRTDSSNYSPVEMWNGGCQIVALNFQTPGPEMDVYQGRFQDNGACGYVLKPAFLRDPNGTFNPRALAQGPWWARKRLNIRVISGQQLPKVNKNKNSIVDPKVTVEIHGVSRDVASRQTAVITNNGFNPWWDTEFAFEVVVPDLALIRFLVEDYDASSKNDFIGQSTIPLNSLKQGYRHVHLMSKNGDQHPSATLFVKISLQD.

Residues alanine 21–histidine 130 form the PH domain. The substrate binding stretch occupies residues lysine 30 to lysine 57. EF-hand domains follow at residues lysine 140–glutamine 175 and valine 176–arginine 211. The Ca(2+) site is built by aspartate 153, asparagine 155, aspartate 157, lysine 159, glutamate 164, aspartate 189, serine 191, threonine 193, serine 195, and glutamate 200. Serine 191 carries O-linked (GlcNAc) serine glycosylation. Threonine 193 carries an O-linked (GlcNAc) threonine glycan. Residues glutamine 296–lysine 440 form the PI-PLC X-box domain. Histidine 311 is a catalytic residue. The Ca(2+) site is built by asparagine 312, glutamate 341, and aspartate 343. Histidine 356 is a catalytic residue. Glutamate 390 contacts Ca(2+). 2 residues coordinate substrate: lysine 438 and lysine 440. Threonine 457 bears the Phosphothreonine mark. The residue at position 460 (serine 460) is a Phosphoserine. The region spanning leucine 492–arginine 609 is the PI-PLC Y-box domain. Residues serine 522 and arginine 549 each contribute to the substrate site. Residues proline 611–serine 737 enclose the C2 domain. Ca(2+) is bound by residues isoleucine 651, aspartate 653, asparagine 677, aspartate 706, tyrosine 707, and aspartate 708.

Interacts with TGM2. It depends on Ca(2+) as a cofactor. Strongly expressed in lung, liver and heart. Also expressed at least in pancreas, kidney, skeletal muscle, placenta and brain.

It carries out the reaction a 1,2-diacyl-sn-glycero-3-phospho-(1D-myo-inositol-4,5-bisphosphate) + H2O = 1D-myo-inositol 1,4,5-trisphosphate + a 1,2-diacyl-sn-glycerol + H(+). It catalyses the reaction a 1,2-diacyl-sn-glycero-3-phospho-(1D-myo-inositol) + H2O = 1D-myo-inositol 1-phosphate + a 1,2-diacyl-sn-glycerol + H(+). The production of the second messenger molecules diacylglycerol (DAG) and inositol 1,4,5-trisphosphate (IP3) is mediated by activated phosphatidylinositol-specific phospholipase C enzymes. Essential for trophoblast and placental development. Binds phosphatidylinositol 4,5-bisphosphate. The chain is 1-phosphatidylinositol 4,5-bisphosphate phosphodiesterase delta-1 from Homo sapiens (Human).